Reading from the N-terminus, the 430-residue chain is RPM1 interacting protein 13 (430 aa).

The segment at 1–21 (MGSGNHVDIVDVSSGEEDVDT) is disordered. A nuclear localization region spans residues 231–300 (RHRIRQPIPH…QVSQSSHHSS (70 aa)).

In terms of assembly, interacts with RPM1 (via its NB-ARC domain). Binds to ARF1 in the nucleus.

The protein localises to the nucleus. Its function is as follows. Resistance protein interactor which positively enhances RPM1-mediated resistance to necrotrophic bacterial pathogens Pseudomonas syringae pv. tomato DC3000 harboring type III effector protein AvrRpm1 or AvrB, but prevents the hypersensitive response (HR) controlled by RPM1. Together with ARF1, promotes leaf senescence and cell death, probably by facilitating the translocation of ARF1 into the nucleus, and activates ROS-related enzymes (e.g. POD, CAT and SOD). The sequence is that of RPM1 interacting protein 13 from Arabidopsis thaliana (Mouse-ear cress).